The primary structure comprises 249 residues: MAELSDQEMLRYNRQIILRGFDFDGQEALKDSRVLIVGLGGLGCAASQYLASAGVGNLTLLDFDTVSLSNLQRQTLHSDATVGQPKVESARDALTRINPHIAITPVNALLDDAELAALIAEHDLVLDCTDNVAVRNQLNAGCFAAKVPLVSGAAIRMEGQITVFTYQDGEPCYRCLSRLFGENALTCVEAGVMAPLIGVIGSLQAMEAIKMLAGYGKPASGKIVMYDAMTCQFREMKLMRNPGCEVCGQ.

ATP-binding positions include Gly-41, Asp-62, 69–73, Lys-86, and 130–131; these read SNLQR and DN. Zn(2+) contacts are provided by Cys-172, Cys-175, Cys-244, and Cys-247.

Homodimer. Forms a stable heterotetrameric complex of 2 MoeB and 2 MoaD during adenylation of MoaD. It depends on Zn(2+) as a cofactor.

It carries out the reaction [molybdopterin-synthase sulfur-carrier protein]-C-terminal Gly-Gly + ATP + H(+) = [molybdopterin-synthase sulfur-carrier protein]-C-terminal Gly-Gly-AMP + diphosphate. The protein operates within cofactor biosynthesis; molybdopterin biosynthesis. Its function is as follows. Catalyzes the adenylation by ATP of the carboxyl group of the C-terminal glycine of sulfur carrier protein MoaD. The protein is Molybdopterin-synthase adenylyltransferase (moeB) of Escherichia coli (strain K12).